A 389-amino-acid polypeptide reads, in one-letter code: Flap endonuclease 1 (389 aa).

The interval 1-105 (MGIKGLTALM…GELAKRKDKR (105 aa)) is N-domain. D34 serves as a coordination point for Mg(2+). DNA is bound at residue R71. Mg(2+) is bound by residues D87, E159, E161, D180, and D182. An I-domain region spans residues 123–254 (EVEKLSKRTV…KTALKLIKEH (132 aa)). A DNA-binding site is contributed by E159. DNA-binding residues include G232 and D234. D234 contributes to the Mg(2+) binding site. Positions 338–346 (SQNRLESFF) are interaction with PCNA. Residues 356–389 (IGKRKVEEKKGKNGKAGLANKKSKGVSGFRRSKN) form a disordered region.

It belongs to the XPG/RAD2 endonuclease family. FEN1 subfamily. Interacts with PCNA. Three molecules of FEN1 bind to one PCNA trimer with each molecule binding to one PCNA monomer. PCNA stimulates the nuclease activity without altering cleavage specificity. The cofactor is Mg(2+). Phosphorylated. Phosphorylation upon DNA damage induces relocalization to the nuclear plasma.

The protein resides in the nucleus. It is found in the nucleolus. It localises to the nucleoplasm. The protein localises to the mitochondrion. Its function is as follows. Structure-specific nuclease with 5'-flap endonuclease and 5'-3' exonuclease activities involved in DNA replication and repair. During DNA replication, cleaves the 5'-overhanging flap structure that is generated by displacement synthesis when DNA polymerase encounters the 5'-end of a downstream Okazaki fragment. It enters the flap from the 5'-end and then tracks to cleave the flap base, leaving a nick for ligation. Also involved in the long patch base excision repair (LP-BER) pathway, by cleaving within the apurinic/apyrimidinic (AP) site-terminated flap. Acts as a genome stabilization factor that prevents flaps from equilibrating into structures that lead to duplications and deletions. Also possesses 5'-3' exonuclease activity on nicked or gapped double-stranded DNA, and exhibits RNase H activity. Also involved in replication and repair of rDNA and in repairing mitochondrial DNA. This chain is Flap endonuclease 1, found in Ostreococcus lucimarinus (strain CCE9901).